We begin with the raw amino-acid sequence, 208 residues long: CASP-like protein 4A4 (208 aa).

Over 1 to 53 (MKELKDHVVVITYGPSSEASVTASPVSQQTPSLFAYSVTPSASRFSSRRASVH) the chain is Cytoplasmic. Residues 54–74 (VIGLVLRFITMVLCFVSALSL) traverse the membrane as a helical segment. Over 75 to 92 (AVNVQRPSKRHLTQNSSS) the chain is Extracellular. A glycan (N-linked (GlcNAc...) asparagine) is linked at N89. The chain crosses the membrane as a helical span at residues 93-113 (FASYPELLYCFGVAVIGFVYT). Over 114–141 (SLQTFKGVCDITHRGVLISEPLSDYISF) the chain is Cytoplasmic. The chain crosses the membrane as a helical span at residues 142–162 (IFDQVICYLLVSSSSVAIAWI). The Extracellular segment spans residues 163–176 (QHINEDAIKTLRNN). N-linked (GlcNAc...) asparagine glycosylation is present at N175. A helical membrane pass occupies residues 177 to 197 (SIVSVSMSFSAFLVLTLSGLL). Residues 198-208 (SGYKLCKRFMW) lie on the Cytoplasmic side of the membrane.

The protein belongs to the Casparian strip membrane proteins (CASP) family. In terms of assembly, homodimer and heterodimers.

The protein resides in the cell membrane. This is CASP-like protein 4A4 from Arabidopsis thaliana (Mouse-ear cress).